The sequence spans 198 residues: Na(+)-translocating NADH-quinone reductase subunit E (198 aa).

A run of 6 helical transmembrane segments spans residues 11-31 (AVFV…FLAV), 35-55 (VSTA…SVPV), 77-97 (FLNF…LEMI), 110-130 (GIFL…SFMV), 140-160 (VVYG…MAGI), and 176-196 (LGIT…FSGV).

This sequence belongs to the NqrDE/RnfAE family. In terms of assembly, composed of six subunits; NqrA, NqrB, NqrC, NqrD, NqrE and NqrF.

It localises to the cell inner membrane. It catalyses the reaction a ubiquinone + n Na(+)(in) + NADH + H(+) = a ubiquinol + n Na(+)(out) + NAD(+). NQR complex catalyzes the reduction of ubiquinone-1 to ubiquinol by two successive reactions, coupled with the transport of Na(+) ions from the cytoplasm to the periplasm. NqrA to NqrE are probably involved in the second step, the conversion of ubisemiquinone to ubiquinol. This is Na(+)-translocating NADH-quinone reductase subunit E from Serratia proteamaculans (strain 568).